We begin with the raw amino-acid sequence, 266 residues long: Killer cell lectin-like receptor 8 (266 aa).

Over 1–44 (MSEQEVTFPTMRFHKSSGLNSQVRLEGTQRSRKAGLRVCSVPWQ) the chain is Cytoplasmic. The helical; Signal-anchor for type II membrane protein transmembrane segment at 45–66 (LIVIALGILCSLRLVIVAVFVT) threads the bilayer. Over 67-266 (KFFQYSQHKQ…CGKKLDKFPD (200 aa)) the chain is Extracellular. N-linked (GlcNAc...) asparagine glycosylation is found at asparagine 87 and asparagine 104. Residues 143–261 (GVKYWFCYGT…PYYCICGKKL (119 aa)) form the C-type lectin domain. 4 disulfides stabilise this stretch: cysteine 149–cysteine 154, cysteine 167–cysteine 255, cysteine 171–cysteine 257, and cysteine 236–cysteine 249.

In terms of assembly, homodimer; disulfide-linked. Interacts with the adapter protein TYROBP/DAP12; the interaction leads to natural killer cell activation.

It is found in the cell membrane. Receptor on natural killer (NK) cells for class I MHC. The polypeptide is Killer cell lectin-like receptor 8 (Klra8) (Mus musculus (Mouse)).